Here is a 117-residue protein sequence, read N- to C-terminus: Aspartate 1-decarboxylase (117 aa).

Catalysis depends on Ser-25, which acts as the Schiff-base intermediate with substrate; via pyruvic acid. Residue Ser-25 is modified to Pyruvic acid (Ser). Thr-57 is a binding site for substrate. The active-site Proton donor is Tyr-58. Gly-72–Ala-74 serves as a coordination point for substrate.

The protein belongs to the PanD family. In terms of assembly, heterooctamer of four alpha and four beta subunits. Requires pyruvate as cofactor. In terms of processing, is synthesized initially as an inactive proenzyme, which is activated by self-cleavage at a specific serine bond to produce a beta-subunit with a hydroxyl group at its C-terminus and an alpha-subunit with a pyruvoyl group at its N-terminus.

Its subcellular location is the cytoplasm. It catalyses the reaction L-aspartate + H(+) = beta-alanine + CO2. It participates in cofactor biosynthesis; (R)-pantothenate biosynthesis; beta-alanine from L-aspartate: step 1/1. Its function is as follows. Catalyzes the pyruvoyl-dependent decarboxylation of aspartate to produce beta-alanine. This Helicobacter pylori (strain ATCC 700392 / 26695) (Campylobacter pylori) protein is Aspartate 1-decarboxylase.